A 2190-amino-acid polypeptide reads, in one-letter code: Integrator complex subunit 1 (2190 aa).

Positions 1–61 are disordered; the sequence is MNRAKPTTVR…GLPSERKRDA (61 aa). At serine 13 the chain carries Phosphoserine. Residues 34 to 44 show a composition bias toward polar residues; that stretch reads GQANESKTAST. Residue lysine 47 is modified to N6-acetyllysine. At threonine 83 the chain carries Phosphothreonine. Phosphoserine is present on residues serine 87, serine 307, and serine 924. The interval 922–945 is disordered; it reads AASGEEDDEGESKEQKAKKRQRQQ. Positions 923–932 are enriched in acidic residues; the sequence is ASGEEDDEGE. A helical membrane pass occupies residues 1159-1179; it reads TATMHILVVHAMVILLTLGPP. A disordered region spans residues 1311–1334; the sequence is SLPPRRDSTEAPKPKSSPEQPIGQ. The segment covering 1314–1323 has biased composition (basic and acidic residues); it reads PRRDSTEAPK. Residues serine 1318, serine 1326, serine 1327, and serine 1395 each carry the phosphoserine modification.

The protein belongs to the Integrator subunit 1 family. Component of the Integrator complex, composed of core subunits INTS1, INTS2, INTS3, INTS4, INTS5, INTS6, INTS7, INTS8, INTS9/RC74, INTS10, INTS11/CPSF3L, INTS12, INTS13, INTS14 and INTS15. The core complex associates with protein phosphatase 2A subunits PPP2CA and PPP2R1A, to form the Integrator-PP2A (INTAC) complex. Interacts with ESRRB, ESRRB is not a core component of the Integrator complex and this association is a bridge for the interaction with the multiprotein complex Integrator; attracts the transcriptional machinery.

Its subcellular location is the nucleus. The protein resides in the nucleus membrane. Its function is as follows. Component of the integrator complex, a multiprotein complex that terminates RNA polymerase II (Pol II) transcription in the promoter-proximal region of genes. The integrator complex provides a quality checkpoint during transcription elongation by driving premature transcription termination of transcripts that are unfavorably configured for transcriptional elongation: the complex terminates transcription by (1) catalyzing dephosphorylation of the C-terminal domain (CTD) of Pol II subunit POLR2A/RPB1 and SUPT5H/SPT5, (2) degrading the exiting nascent RNA transcript via endonuclease activity and (3) promoting the release of Pol II from bound DNA. The integrator complex is also involved in terminating the synthesis of non-coding Pol II transcripts, such as enhancer RNAs (eRNAs), small nuclear RNAs (snRNAs), telomerase RNAs and long non-coding RNAs (lncRNAs). Within the integrator complex, INTS1 is involved in the post-termination step: INTS1 displaces INTS3 and the SOSS factors, allowing the integrator complex to return to the closed conformation, ready to bind to the paused elongation complex for another termination cycle. Mediates recruitment of cytoplasmic dynein to the nuclear envelope, probably as component of the integrator complex. The polypeptide is Integrator complex subunit 1 (Homo sapiens (Human)).